The primary structure comprises 77 residues: Large ribosomal subunit protein bL28 (77 aa).

Residues 1-20 are disordered; the sequence is MSRVCQVTGKGPVTGNNISH.

The protein belongs to the bacterial ribosomal protein bL28 family.

This chain is Large ribosomal subunit protein bL28, found in Pseudomonas syringae pv. tomato (strain ATCC BAA-871 / DC3000).